The primary structure comprises 637 residues: DNA gyrase subunit B (637 aa).

The 115-residue stretch at cysteine 420–proline 534 folds into the Toprim domain. Residues glutamate 426, aspartate 499, and aspartate 501 each contribute to the Mg(2+) site.

It belongs to the type II topoisomerase GyrB family. Heterotetramer, composed of two GyrA and two GyrB chains. In the heterotetramer, GyrA contains the active site tyrosine that forms a transient covalent intermediate with DNA, while GyrB binds cofactors and catalyzes ATP hydrolysis. Mg(2+) serves as cofactor. It depends on Mn(2+) as a cofactor. The cofactor is Ca(2+).

Its subcellular location is the cytoplasm. The catalysed reaction is ATP-dependent breakage, passage and rejoining of double-stranded DNA.. A type II topoisomerase that negatively supercoils closed circular double-stranded (ds) DNA in an ATP-dependent manner to modulate DNA topology and maintain chromosomes in an underwound state. Negative supercoiling favors strand separation, and DNA replication, transcription, recombination and repair, all of which involve strand separation. Also able to catalyze the interconversion of other topological isomers of dsDNA rings, including catenanes and knotted rings. Type II topoisomerases break and join 2 DNA strands simultaneously in an ATP-dependent manner. The chain is DNA gyrase subunit B from Clostridium acetobutylicum (strain ATCC 824 / DSM 792 / JCM 1419 / IAM 19013 / LMG 5710 / NBRC 13948 / NRRL B-527 / VKM B-1787 / 2291 / W).